We begin with the raw amino-acid sequence, 383 residues long: Glutamate 5-kinase (383 aa).

An ATP-binding site is contributed by K17. Positions 64, 151, and 165 each coordinate substrate. 185 to 186 (SD) provides a ligand contact to ATP. Residues 291–367 (SGTIRVDAGA…DEIEGILGYN (77 aa)) form the PUA domain.

It belongs to the glutamate 5-kinase family.

The protein resides in the cytoplasm. The catalysed reaction is L-glutamate + ATP = L-glutamyl 5-phosphate + ADP. Its pathway is amino-acid biosynthesis; L-proline biosynthesis; L-glutamate 5-semialdehyde from L-glutamate: step 1/2. Catalyzes the transfer of a phosphate group to glutamate to form L-glutamate 5-phosphate. The sequence is that of Glutamate 5-kinase from Methanosarcina barkeri (strain Fusaro / DSM 804).